The following is a 169-amino-acid chain: Unfolded protein response-inducible protein 1 (169 aa).

Functionally, involved in the unfolded protein response (UPR), a transcriptional response which up-regulates genes that enable cells to cope with misfolded, endoplasmic reticulum-retained proteins. UPR is part of the endoplasmic reticulum quality control (ERQC) which prevents the exit of misfolded secretory and membrane proteins from the endoplasmic reticulum. The chain is Unfolded protein response-inducible protein 1 (ULI1) from Saccharomyces cerevisiae (strain ATCC 204508 / S288c) (Baker's yeast).